A 261-amino-acid polypeptide reads, in one-letter code: Small ribosomal subunit protein uS2 (261 aa).

The interval Glu223–Asp261 is disordered.

This sequence belongs to the universal ribosomal protein uS2 family.

In Lactobacillus johnsonii (strain CNCM I-12250 / La1 / NCC 533), this protein is Small ribosomal subunit protein uS2.